Here is a 79-residue protein sequence, read N- to C-terminus: uncharacterized protein (79 aa).

The next 2 membrane-spanning stretches (helical) occupy residues Cys-28–Ala-48 and Val-51–Val-71.

The protein resides in the cell membrane. This is an uncharacterized protein from Methanocaldococcus jannaschii (strain ATCC 43067 / DSM 2661 / JAL-1 / JCM 10045 / NBRC 100440) (Methanococcus jannaschii).